Reading from the N-terminus, the 497-residue chain is Type II secretion system protein E (497 aa).

255-262 (GPTGSGKS) lines the ATP pocket. 4 residues coordinate Zn(2+): C388, C391, C419, and C422.

Belongs to the GSP E family. Forms homooligomers; most probably hexamers. Interacts with PulL/GspL. The cofactor is Zn(2+).

The protein localises to the cell inner membrane. It carries out the reaction ATP + H2O + cellular proteinSide 1 = ADP + phosphate + cellular proteinSide 2.. Functionally, ATPase component of the type II secretion system required for the energy-dependent secretion of extracellular factors such as proteases and toxins from the periplasm. Acts as a molecular motor to provide the energy that is required for assembly of the pseudopilus and the extrusion of substrates generated in the cytoplasm. This chain is Type II secretion system protein E (pulE), found in Klebsiella pneumoniae.